The sequence spans 111 residues: Large ribosomal subunit protein eL31 (111 aa).

The protein belongs to the eukaryotic ribosomal protein eL31 family.

This Dictyostelium discoideum (Social amoeba) protein is Large ribosomal subunit protein eL31 (rpl31).